The following is a 161-amino-acid chain: Ureidoglycolate lyase (161 aa).

The protein belongs to the ureidoglycolate lyase family. In terms of assembly, homodimer. Ni(2+) is required as a cofactor.

It carries out the reaction (S)-ureidoglycolate = urea + glyoxylate. Its pathway is nitrogen metabolism; (S)-allantoin degradation. Functionally, catalyzes the catabolism of the allantoin degradation intermediate (S)-ureidoglycolate, generating urea and glyoxylate. Involved in the utilization of allantoin as nitrogen source. This chain is Ureidoglycolate lyase, found in Rhodobacter capsulatus (strain ATCC BAA-309 / NBRC 16581 / SB1003).